The primary structure comprises 219 residues: Redox-sensing transcriptional repressor Rex (219 aa).

Residues Leu18–Phe57 constitute a DNA-binding region (H-T-H motif). Gly92–Gly97 contacts NAD(+).

This sequence belongs to the transcriptional regulatory Rex family. In terms of assembly, homodimer.

The protein localises to the cytoplasm. Modulates transcription in response to changes in cellular NADH/NAD(+) redox state. The polypeptide is Redox-sensing transcriptional repressor Rex (Exiguobacterium sibiricum (strain DSM 17290 / CCUG 55495 / CIP 109462 / JCM 13490 / 255-15)).